A 94-amino-acid polypeptide reads, in one-letter code: MPPPRGKFSKDRKTKRNQQSLLFKRKRFCRFTVTGVKEIDYKDLDVLRDFVGENGKITPARLTGTRAFFQRQLTTAIKRARFLALLPYSDQHKV.

It belongs to the bacterial ribosomal protein bS18 family. As to quaternary structure, part of the 30S ribosomal subunit. Forms a tight heterodimer with protein bS6.

Functionally, binds as a heterodimer with protein bS6 to the central domain of the 16S rRNA, where it helps stabilize the platform of the 30S subunit. The sequence is that of Small ribosomal subunit protein bS18 from Leptothrix cholodnii (strain ATCC 51168 / LMG 8142 / SP-6) (Leptothrix discophora (strain SP-6)).